The following is a 115-amino-acid chain: Regulator of ribonuclease activity B (115 aa).

It belongs to the RraB family. In terms of assembly, interacts with the C-terminal region of Rne.

The protein localises to the cytoplasm. Its function is as follows. Globally modulates RNA abundance by binding to RNase E (Rne) and regulating its endonucleolytic activity. Can modulate Rne action in a substrate-dependent manner by altering the composition of the degradosome. The protein is Regulator of ribonuclease activity B of Aeromonas salmonicida (strain A449).